Consider the following 368-residue polypeptide: 3-dehydroquinate synthase (368 aa).

NAD(+) contacts are provided by residues 71-76 (DGEAAK), 105-109 (GATTD), 129-130 (TT), Lys-142, and Lys-151. Zn(2+) is bound by residues Glu-184, His-247, and His-263.

This sequence belongs to the sugar phosphate cyclases superfamily. Dehydroquinate synthase family. Co(2+) is required as a cofactor. Zn(2+) serves as cofactor. Requires NAD(+) as cofactor.

It is found in the cytoplasm. It carries out the reaction 7-phospho-2-dehydro-3-deoxy-D-arabino-heptonate = 3-dehydroquinate + phosphate. Its pathway is metabolic intermediate biosynthesis; chorismate biosynthesis; chorismate from D-erythrose 4-phosphate and phosphoenolpyruvate: step 2/7. In terms of biological role, catalyzes the conversion of 3-deoxy-D-arabino-heptulosonate 7-phosphate (DAHP) to dehydroquinate (DHQ). This is 3-dehydroquinate synthase from Thermobifida fusca (strain YX).